Consider the following 373-residue polypeptide: UDP-sugar transporter UST74c (373 aa).

The segment at L27 to L49 is disordered. S50 carries the phosphoserine modification. A run of 8 helical transmembrane segments spans residues H89–G111, F131–L153, I174–L196, M206–Y225, Y238–G260, V275–C297, S302–I324, and V329–V351.

It belongs to the TPT transporter family. SLC35D subfamily.

It localises to the golgi apparatus membrane. Functionally, involved in the import of UDP-sugars from the cytoplasm into the Golgi lumen. The polypeptide is UDP-sugar transporter UST74c (frc) (Drosophila melanogaster (Fruit fly)).